A 91-amino-acid chain; its full sequence is Large ribosomal subunit protein bL27 (91 aa).

The protein belongs to the bacterial ribosomal protein bL27 family. As to quaternary structure, part of the 50S ribosomal subunit. Contacts protein L18.

In terms of biological role, binds the 5S and 23S rRNAs and also the tRNA in the P site. This chain is Large ribosomal subunit protein bL27 (rpmA), found in Deinococcus radiodurans (strain ATCC 13939 / DSM 20539 / JCM 16871 / CCUG 27074 / LMG 4051 / NBRC 15346 / NCIMB 9279 / VKM B-1422 / R1).